Consider the following 70-residue polypeptide: DNA-directed RNA polymerase subunit omega (70 aa).

Belongs to the RNA polymerase subunit omega family. The RNAP catalytic core consists of 2 alpha, 1 beta, 1 beta' and 1 omega subunit. When a sigma factor is associated with the core the holoenzyme is formed, which can initiate transcription.

It catalyses the reaction RNA(n) + a ribonucleoside 5'-triphosphate = RNA(n+1) + diphosphate. Promotes RNA polymerase assembly. Latches the N- and C-terminal regions of the beta' subunit thereby facilitating its interaction with the beta and alpha subunits. In Thermoanaerobacter sp. (strain X514), this protein is DNA-directed RNA polymerase subunit omega.